Consider the following 189-residue polypeptide: Cytidylate kinase (189 aa).

Residue 7-15 (GPPGSGKTS) participates in ATP binding.

This sequence belongs to the cytidylate kinase family. Type 2 subfamily.

The protein localises to the cytoplasm. It catalyses the reaction CMP + ATP = CDP + ADP. The catalysed reaction is dCMP + ATP = dCDP + ADP. The sequence is that of Cytidylate kinase from Saccharolobus islandicus (strain L.S.2.15 / Lassen #1) (Sulfolobus islandicus).